The sequence spans 572 residues: E3 SUMO-protein ligase PIAS2 (572 aa).

Residues Val-11 to Leu-45 form the SAP domain. Residues Leu-19–Leu-23 carry the LXXLL motif motif. Glycyl lysine isopeptide (Lys-Gly) (interchain with G-Cter in SUMO2) cross-links involve residues Lys-46 and Lys-249. Residues Gln-134–Leu-299 enclose the PINIT domain. The segment at Pro-331–Asp-412 adopts an SP-RING-type zinc-finger fold. The Zn(2+) site is built by Cys-362, His-364, Cys-385, and Cys-388. Glycyl lysine isopeptide (Lys-Gly) (interchain with G-Cter in SUMO2) cross-links involve residues Lys-430, Lys-435, Lys-443, and Lys-452. The interval Ile-467–Thr-473 is SUMO1-binding. Ser-476, Ser-477, and Ser-478 each carry phosphoserine. Residues Pro-484–Phe-492 carry the Nuclear localization signal motif. Residue Lys-489 forms a Glycyl lysine isopeptide (Lys-Gly) (interchain with G-Cter in SUMO2) linkage. Ser-499 carries the post-translational modification Phosphoserine. Lys-502 is covalently cross-linked (Glycyl lysine isopeptide (Lys-Gly) (interchain with G-Cter in SUMO2)). Residues Ala-523–Gln-572 are disordered. Residues Asn-558–Gln-572 are compositionally biased toward polar residues.

It belongs to the PIAS family. As to quaternary structure, binds SUMO1 and UBE2I. Interacts with AXIN1, JUN, MDM2, PARK7, TP53 and TP73 isoform alpha, but not TP73 isoform beta. Interacts with STAT4 following IL12 and IFN-alpha stimulation of T-cells. Interacts also with GTF2I, GTF2IRD1, IKFZ1, DAB2 and MSX2, as well as with several steroid receptors, including ESR1, ESR2, NR3C1, PGR, AR, and with NCOA2. Sumoylation of a target protein seems to enhance the interaction. Binds to sumoylated ELK1. Binds DNA, such as CDKN1A promoter, in a sequence-specific manner. Interacts with PLAG1. Interacts with KLF8; the interaction results in SUMO ligation and repression of KLF8 transcriptional activity and of its cell cycle progression into G(1) phase. Interacts with IFIH1/MDA5. Interacts with PML. Interacts with PRDM1. Post-translationally, sumoylated. Mainly expressed in testis.

The protein resides in the nucleus speckle. It is found in the nucleus. Its subcellular location is the PML body. Its pathway is protein modification; protein sumoylation. Functions as an E3-type small ubiquitin-like modifier (SUMO) ligase, stabilizing the interaction between UBE2I and the substrate, and as a SUMO-tethering factor. Plays a crucial role as a transcriptional coregulation in various cellular pathways, including the STAT pathway, the p53 pathway and the steroid hormone signaling pathway. The effects of this transcriptional coregulation, transactivation or silencing may vary depending upon the biological context and PIAS2 isoform studied. However, it seems to be mostly involved in gene silencing. Binds to sumoylated ELK1 and enhances its transcriptional activity by preventing recruitment of HDAC2 by ELK1, thus reversing SUMO-mediated repression of ELK1 transactivation activity. Sumoylates PML at'Lys-65' and 'Lys-160'. The protein is E3 SUMO-protein ligase PIAS2 (Pias2) of Rattus norvegicus (Rat).